A 607-amino-acid polypeptide reads, in one-letter code: Oligoendopeptidase F homolog (607 aa).

His-384 provides a ligand contact to Zn(2+). Glu-385 is a catalytic residue. Positions 388 and 391 each coordinate Zn(2+).

This sequence belongs to the peptidase M3B family. It depends on Zn(2+) as a cofactor.

The polypeptide is Oligoendopeptidase F homolog (pepF) (Mycoplasma genitalium (strain ATCC 33530 / DSM 19775 / NCTC 10195 / G37) (Mycoplasmoides genitalium)).